The following is a 576-amino-acid chain: Arginine--tRNA ligase (576 aa).

The 'HIGH' region signature appears at 122–132; sequence PNVAKEMHVGH.

It belongs to the class-I aminoacyl-tRNA synthetase family. In terms of assembly, monomer.

Its subcellular location is the cytoplasm. The catalysed reaction is tRNA(Arg) + L-arginine + ATP = L-arginyl-tRNA(Arg) + AMP + diphosphate. The chain is Arginine--tRNA ligase from Thermobifida fusca (strain YX).